Here is a 453-residue protein sequence, read N- to C-terminus: Zinc finger CCCH domain-containing protein 26 (453 aa).

The segment covering 1–15 (MSETQQQVQNSTGSI) has biased composition (polar residues). The disordered stretch occupies residues 1–47 (MSETQQQVQNSTGSIRSPDKIEDTFRRMKVNEDNMEQSSPYPDRPGE). Ser-2 carries the N-acetylserine modification. The span at 17–32 (SPDKIEDTFRRMKVNE) shows a compositional bias: basic and acidic residues. 5 consecutive C3H1-type zinc fingers follow at residues 44 to 72 (RPGERDCQFFLRTGQCGYGNSCRYNHPLT), 95 to 112 (ETGACKYGPTCKYHHPKD), 129 to 157 (RQGEKPCPYYMQTGLCRFGVACKFHHPHP), 261 to 289 (FSERAECRFFMNTGTCKYGDDCKYSHPKE), and 307 to 335 (RPGQPACGNFKAYGFCKFGANCKFDHSML). Residues 360 to 379 (STNLRISSPPSPSDMTTLSN) show a composition bias toward polar residues. Residues 360–453 (STNLRISSPP…KVQDSSDKST (94 aa)) form a disordered region. Residues 391-407 (ETEKQDDSPTEPEKSEV) show a composition bias toward basic and acidic residues. Over residues 413–422 (PNGSDSTSLP) the composition is skewed to polar residues. The segment covering 441-453 (DSSKVQDSSDKST) has biased composition (basic and acidic residues).

The protein resides in the nucleus. The polypeptide is Zinc finger CCCH domain-containing protein 26 (ZFN2) (Arabidopsis thaliana (Mouse-ear cress)).